Consider the following 143-residue polypeptide: MFLGTHHPKLDDKGRLTLPAKFREALAGGLMVTKGQDHCLYVFPRAEFEQMARKVAEAPFTNESVRAYQRYLFAGTDEQQPDGQGRISIAAELRRYAGLTKECVVIGAINRLEIWNAERWQTYLDEHEEDYAQAREEVLPGVF.

SpoVT-AbrB domains follow at residues 5–47 and 76–119; these read THHP…PRAE and TDEQ…NAER.

Belongs to the MraZ family. In terms of assembly, forms oligomers.

It is found in the cytoplasm. The protein localises to the nucleoid. This Saccharopolyspora erythraea (strain ATCC 11635 / DSM 40517 / JCM 4748 / NBRC 13426 / NCIMB 8594 / NRRL 2338) protein is Transcriptional regulator MraZ.